The following is a 744-amino-acid chain: Tripartite motif-containing protein 2 (744 aa).

A Phosphoserine modification is found at Ser10. The segment at Cys23–Arg64 adopts an RING-type zinc-finger fold. The B box-type zinc-finger motif lies at Gly113–Leu154. Cys118, His121, Cys141, and His146 together coordinate Zn(2+). Residues Thr320–Val421 form a Filamin repeat. At Thr371 the chain carries Phosphothreonine. Phosphoserine is present on residues Ser375, Ser424, and Ser428. The interval Glu432–Lys462 is disordered. NHL repeat units lie at residues Ile473 to Asp516, Lys520 to Asp563, Gly564 to Asn605, Val609 to Glu652, Met656 to Ser699, and Gly700 to Leu743.

The protein belongs to the TRIM/RBCC family. Forms homooligomers. Interacts with TRIM3; this interaction reduces TRIM2 activity. Interacts with myosin V; myosin V may not be a substrate for ubiquitination. Interacts with NEFL. Interacts with phosphorylated BCL2L11. Interacts with SIRPA. In terms of processing, RING-type zinc finger-dependent and UBE2D1-dependent autoubiquitination. In terms of tissue distribution, highly expressed in the cerebellum, hippocampus, retina and spinal cord. In the cerebellum, strongest expression in Purkinje cells and in the deep cerebellar nuclei. In retina, high expression in the ganglionic cell layer, inner nuclear layer and inthe outer plexiform layer. Particularly high expression in the hippocampus, in pyramidal cells of CA1-CA3 hippocampal areas and ingranule cells of the dentate gyrus.

It is found in the cytoplasm. It catalyses the reaction S-ubiquitinyl-[E2 ubiquitin-conjugating enzyme]-L-cysteine + [acceptor protein]-L-lysine = [E2 ubiquitin-conjugating enzyme]-L-cysteine + N(6)-ubiquitinyl-[acceptor protein]-L-lysine.. It functions in the pathway protein modification; protein ubiquitination. Functionally, UBE2D1-dependent E3 ubiquitin-protein ligase that mediates the ubiquitination of NEFL and of phosphorylated BCL2L11. Plays a neuroprotective function. May play a role in neuronal rapid ischemic tolerance. Plays a role in antiviral immunity and limits new world arenavirus infection independently of its ubiquitin ligase activity by decreasing virus internalization. This chain is Tripartite motif-containing protein 2 (Trim2), found in Mus musculus (Mouse).